Reading from the N-terminus, the 167-residue chain is Inclusion membrane protein G (167 aa).

2 helical membrane passes run 37-57 and 63-83; these read LSLF…AVLF and VLPY…AVIV. 2 disordered regions span residues 97-136 and 148-167; these read KRSP…STFG and VSGA…SHSF. A compositionally biased stretch (low complexity) spans 122–134; the sequence is ESASPQASPTSST. Positions 161–166 match the Phosphorylation-dependent binding motif motif; the sequence is RSRSHS. Position 166 is a phosphoserine (serine 166).

In terms of processing, phosphorylated by chlamydial kinase Pnk1.

The protein resides in the secreted. It localises to the host vacuole. It is found in the host pathogen-containing vacuole. Its subcellular location is the host pathogen-containing vacuole membrane. Functionally, inclusion membrane protein probably involved in early modification events of the chlamydial inclusion. Binds to the host cell 14-3-3 beta (YWHAB); phosphorylation of Ser-166 is probably required. This is Inclusion membrane protein G (incG) from Chlamydia trachomatis serovar D (strain ATCC VR-885 / DSM 19411 / UW-3/Cx).